The sequence spans 150 residues: Putative HTH-type transcriptional regulator rrf2-like (150 aa).

The 139-residue stretch at 1–139 folds into the HTH rrf2-type domain; it reads MITQKMKYAL…DSLTLEDMLA (139 aa).

The protein is Putative HTH-type transcriptional regulator rrf2-like of Rhodobacter capsulatus (strain ATCC BAA-309 / NBRC 16581 / SB1003).